A 463-amino-acid chain; its full sequence is Type I restriction enzyme StySPI specificity subunit (463 aa).

It belongs to the type-I restriction system S methylase family. As to quaternary structure, the type I restriction/modification system is composed of three polypeptides R, M and S; the restriction enzyme has stoichiometry R(2)M(2)S(1) while the methyltransferase is M(2)S(1).

Its function is as follows. The specificity (S) subunit of a type I restriction enzyme; this subunit dictates DNA sequence specificity. The M and S subunits together form a methyltransferase (MTase) that methylates A-2 on the top strand and A-3 on the bottom strand of the sequence 5'-AACN(6)GTRC-3'. In the presence of the R subunit the complex can also act as an endonuclease, binding to the same target sequence but cutting the DNA some distance from this site. Whether the DNA is cut or modified depends on the methylation state of the target sequence. When the target site is unmodified, the DNA is cut. When the target site is hemimethylated, the complex acts as a maintenance MTase modifying the DNA so that both strands become methylated. After locating a non-methylated recognition site, the enzyme complex serves as a molecular motor that translocates DNA in an ATP-dependent manner until a collision occurs that triggers cleavage. The sequence is that of Type I restriction enzyme StySPI specificity subunit from Salmonella potsdam.